Here is a 272-residue protein sequence, read N- to C-terminus: Glutamate racemase (272 aa).

Substrate-binding positions include 10-11 (DS) and 42-43 (YG). Cys74 acts as the Proton donor/acceptor in catalysis. A substrate-binding site is contributed by 75–76 (NT). Cys185 (proton donor/acceptor) is an active-site residue. Residue 186-187 (TH) coordinates substrate.

The protein belongs to the aspartate/glutamate racemases family.

The enzyme catalyses L-glutamate = D-glutamate. It participates in cell wall biogenesis; peptidoglycan biosynthesis. Provides the (R)-glutamate required for cell wall biosynthesis. This chain is Glutamate racemase, found in Bacillus velezensis (strain DSM 23117 / BGSC 10A6 / LMG 26770 / FZB42) (Bacillus amyloliquefaciens subsp. plantarum).